The chain runs to 210 residues: Syntaxin-binding protein 6 (210 aa).

At S2 the chain carries N-acetylserine. Residues 151 to 210 form the v-SNARE coiled-coil homology domain; sequence GNSILHSAADSVTSAVQKASQALNERGERLGRAEEKTEDMKNSAQQFAETAHKLAMKHKC.

Part of a ternary complex containing SNAP25 and STX1A that can be dissociated by NAPA and NSF. Interacts with STX4A.

The protein localises to the cytoplasm. It is found in the membrane. In terms of biological role, forms non-fusogenic complexes with SNAP25 and STX1A and may thereby modulate the formation of functional SNARE complexes and exocytosis. In Mus musculus (Mouse), this protein is Syntaxin-binding protein 6 (Stxbp6).